Consider the following 146-residue polypeptide: 3-hydroxyacyl-[acyl-carrier-protein] dehydratase FabZ (146 aa).

The active site involves His-49.

This sequence belongs to the thioester dehydratase family. FabZ subfamily.

It localises to the cytoplasm. It carries out the reaction a (3R)-hydroxyacyl-[ACP] = a (2E)-enoyl-[ACP] + H2O. In terms of biological role, involved in unsaturated fatty acids biosynthesis. Catalyzes the dehydration of short chain beta-hydroxyacyl-ACPs and long chain saturated and unsaturated beta-hydroxyacyl-ACPs. This Pseudomonas aeruginosa (strain LESB58) protein is 3-hydroxyacyl-[acyl-carrier-protein] dehydratase FabZ.